Consider the following 200-residue polypeptide: Probable GTP-binding protein EngB (200 aa).

In terms of domain architecture, EngB-type G spans Ser-26–Lys-200. GTP is bound by residues Gly-34–Ser-41, Gly-61–Gln-65, Asp-80–Gly-83, Thr-147–Asp-150, and Thr-179–Ser-181. Mg(2+)-binding residues include Ser-41 and Thr-63.

This sequence belongs to the TRAFAC class TrmE-Era-EngA-EngB-Septin-like GTPase superfamily. EngB GTPase family. It depends on Mg(2+) as a cofactor.

Necessary for normal cell division and for the maintenance of normal septation. The chain is Probable GTP-binding protein EngB from Ehrlichia chaffeensis (strain ATCC CRL-10679 / Arkansas).